A 490-amino-acid chain; its full sequence is Bifunctional protein HldE (490 aa).

Residues 1–330 are ribokinase; sequence MERKEIESLF…AEIGHAHPDS (330 aa). 205 to 208 lines the ATP pocket; sequence NRKE. Asp275 is an active-site residue. The interval 356–490 is cytidylyltransferase; it reads FTNGCFDLLH…EKIRTGSIKE (135 aa).

The protein in the N-terminal section; belongs to the carbohydrate kinase PfkB family. It in the C-terminal section; belongs to the cytidylyltransferase family. As to quaternary structure, homodimer.

It carries out the reaction D-glycero-beta-D-manno-heptose 7-phosphate + ATP = D-glycero-beta-D-manno-heptose 1,7-bisphosphate + ADP + H(+). It catalyses the reaction D-glycero-beta-D-manno-heptose 1-phosphate + ATP + H(+) = ADP-D-glycero-beta-D-manno-heptose + diphosphate. It functions in the pathway nucleotide-sugar biosynthesis; ADP-L-glycero-beta-D-manno-heptose biosynthesis; ADP-L-glycero-beta-D-manno-heptose from D-glycero-beta-D-manno-heptose 7-phosphate: step 1/4. It participates in nucleotide-sugar biosynthesis; ADP-L-glycero-beta-D-manno-heptose biosynthesis; ADP-L-glycero-beta-D-manno-heptose from D-glycero-beta-D-manno-heptose 7-phosphate: step 3/4. Catalyzes the phosphorylation of D-glycero-D-manno-heptose 7-phosphate at the C-1 position to selectively form D-glycero-beta-D-manno-heptose-1,7-bisphosphate. Its function is as follows. Catalyzes the ADP transfer from ATP to D-glycero-beta-D-manno-heptose 1-phosphate, yielding ADP-D-glycero-beta-D-manno-heptose. This Geotalea uraniireducens (strain Rf4) (Geobacter uraniireducens) protein is Bifunctional protein HldE.